Here is a 340-residue protein sequence, read N- to C-terminus: Glyceraldehyde-3-phosphate dehydrogenase (340 aa).

Residues Ser-11 to Ile-12 and Gly-111 each bind NAD(+). Residue Ser-140–Asn-142 coordinates D-glyceraldehyde 3-phosphate. The active-site Nucleophile is the Cys-141. Position 169 (Arg-169) interacts with NAD(+). His-195–Gly-196 serves as a coordination point for D-glyceraldehyde 3-phosphate. Gln-303 is a binding site for NAD(+).

It belongs to the glyceraldehyde-3-phosphate dehydrogenase family. In terms of assembly, homotetramer.

It is found in the cytoplasm. The enzyme catalyses D-glyceraldehyde 3-phosphate + phosphate + NADP(+) = (2R)-3-phospho-glyceroyl phosphate + NADPH + H(+). It catalyses the reaction D-glyceraldehyde 3-phosphate + phosphate + NAD(+) = (2R)-3-phospho-glyceroyl phosphate + NADH + H(+). The protein operates within carbohydrate degradation; glycolysis; pyruvate from D-glyceraldehyde 3-phosphate: step 1/5. The chain is Glyceraldehyde-3-phosphate dehydrogenase from Methanococcus vannielii (strain ATCC 35089 / DSM 1224 / JCM 13029 / OCM 148 / SB).